The following is a 333-amino-acid chain: MASTKEKLIAHVSKEQPAGPTNKVTVVGVGMVGMAAAVSILLKDLTDELALVDVMEDKLKGEAMDLQHGSLFLKTHKIVADKDYSVTANSKVVVVTAGARQQEGESRLNLVQRNVNIFKFIIPNIIKYSPNCILLVVSNPVDILTYVAWKLSGLPRNRVIGSGTNLDSARFRYLMGEKLGIHPSSCHGWVVGEHGDSSVPVWSGVNVAGVSLQALNPDLGTDKDKEDWKSVHKMVVDSAYEVIKLKGYTSWAIGMSVADLCESILKNMHKCHPVSTLVKGMHGVNEEVFLSVPCILGNNGLTDVVHMTLKPEEEKQLVKSAETLWGVQKELTL.

Residues 30–58 and R100 each bind NAD(+); that span reads GMVGMAAAVSILLKDLTDELALVDVMEDK. Residues R107, N139, and R170 each coordinate substrate. Position 139 (N139) interacts with NAD(+). Catalysis depends on H194, which acts as the Proton acceptor. T249 is a binding site for substrate.

It belongs to the LDH/MDH superfamily. LDH family. Homotetramer.

Its subcellular location is the cytoplasm. It carries out the reaction (S)-lactate + NAD(+) = pyruvate + NADH + H(+). The protein operates within fermentation; pyruvate fermentation to lactate; (S)-lactate from pyruvate: step 1/1. Functionally, interconverts simultaneously and stereospecifically pyruvate and lactate with concomitant interconversion of NADH and NAD(+). This is L-lactate dehydrogenase A chain (ldha) from Danio rerio (Zebrafish).